A 1325-amino-acid polypeptide reads, in one-letter code: Protein PHYTOCHROME-DEPENDENT LATE-FLOWERING (1325 aa).

2 stretches are compositionally biased toward polar residues: residues Ile313–Gly331 and Asn504–Gly515. 5 disordered regions span residues Ile313–Leu371, Glu462–Gly558, Ala593–Pro616, Val852–Gln875, and Gln1160–Ser1325. Basic and acidic residues predominate over residues Ile518 to Ser529. Residues Ala596–Ala607 are compositionally biased toward low complexity. A compositionally biased stretch (polar residues) spans His863–Gln875. The segment covering Gln1160–Gln1224 has biased composition (low complexity). A compositionally biased stretch (polar residues) spans Ser1225–Ile1239. Over residues Thr1240 to Gln1262 the composition is skewed to low complexity. Polar residues-rich tracts occupy residues Val1263–Leu1286 and Pro1293–Ser1325.

As to quaternary structure, component of a red light-dependent nuclear complex made of PHL, PHYB and CO. Interacts directly with PHYB and CO; CO binding requires the presence of PHYB. In terms of tissue distribution, mostly expressed in cotyledons and leaves, both in mesophyll and vasculature cells. Also present in roots, hypocotyls and shoot apices.

Its subcellular location is the nucleus. The protein localises to the nuclear body. The protein resides in the cytoplasmic granule. It localises to the cytoplasm. Triggers photoperiod-monitored flowering by repressing PHYB-dependent flowering negative regulation, probably through physical interactions with PHYB and CO. The sequence is that of Protein PHYTOCHROME-DEPENDENT LATE-FLOWERING from Arabidopsis thaliana (Mouse-ear cress).